A 507-amino-acid polypeptide reads, in one-letter code: Subtilisin-like protease 1 (507 aa).

The signal sequence occupies residues 1 to 19 (MGVFRFISISLAAVSAANA). The propeptide occupies 20 to 116 (AQILSMPHAQ…VEPDTIISVN (97 aa)). An Inhibitor I9 domain is found at 34–113 (SYIVMMKDDT…VMFVEPDTII (80 aa)). The Peptidase S8 domain maps to 126–400 (SWGLARISNS…NVLISNGGAK (275 aa)). Catalysis depends on charge relay system residues D158 and H190. A disordered region spans residues 175–198 (GSNQVNDGDDRDGSGHGTHTSGTM). A glycan (N-linked (GlcNAc...) asparagine) is linked at N251. Polar residues predominate over residues 282-294 (NENQDARSSSPAS). The tract at residues 282-312 (NENQDARSSSPASEPSVCTVGSSAEDDSRSS) is disordered. S345 (charge relay system) is an active-site residue. Positions 378-394 (SSSITDVGPGTPTNVLI) are enriched in polar residues. Residues 378-486 (SSSITDVGPG…YPGGDNFDFD (109 aa)) form a disordered region. Composition is skewed to pro residues over residues 405–428 (KPAP…PSQP) and 438–449 (EPFPGEPFPGEP). Low complexity predominate over residues 450–461 (FPGESSPGESAP). Pro residues predominate over residues 462-476 (APAPMPPSPQHPHTP).

Belongs to the peptidase S8 family.

Its subcellular location is the secreted. Its function is as follows. Secreted subtilisin-like serine protease with keratinolytic activity that contributes to pathogenicity. The protein is Subtilisin-like protease 1 (SUB1) of Trichophyton equinum (Horse ringworm fungus).